A 221-amino-acid chain; its full sequence is Small ribosomal subunit protein uS5 (221 aa).

The S5 DRBM domain maps to 46-109 (IKDEVIDIKR…INAKLNIMEI (64 aa)).

Belongs to the universal ribosomal protein uS5 family. In terms of assembly, part of the 30S ribosomal subunit. Contacts protein S4.

With S4 and S12 plays an important role in translational accuracy. This chain is Small ribosomal subunit protein uS5, found in Thermoplasma volcanium (strain ATCC 51530 / DSM 4299 / JCM 9571 / NBRC 15438 / GSS1).